A 520-amino-acid chain; its full sequence is Endosomal/lysosomal proton channel TMEM175 (520 aa).

The tract at residues 1–27 is disordered; that stretch reads MGENDESEIIEHHDDEEMEKRRPPRTH. At 1-49 the chain is on the cytoplasmic side; the sequence is MGENDESEIIEHHDDEEMEKRRPPRTHAQSFLESVASSVKEGHSSTQSS. Residues 9–21 show a composition bias toward basic and acidic residues; sequence IIEHHDDEEMEKR. Residues 50–72 traverse the membrane as a helical segment; sequence HRLLAYSDALISIIATVMILPVA. Positions 51–57 match the RxxxFSD motif 1 motif; sequence RLLAYSD. Residues 73-93 are Lumenal-facing; it reads HTKIQEDEELKQSIQALLTTK. Residues 74 to 79 are short helix H1-1; the sequence is TKIQED. The interval 81–87 is short helix H2-1; sequence ELKQSIQ. The helical transmembrane segment at 94-116 threads the bilayer; it reads IAVYLMTFLIVTVAWAAHIRLFQ. Over 117 to 122 the chain is Cytoplasmic; sequence VIERID. Residues 123–144 form a helical membrane-spanning segment; that stretch reads DTLALLNLACMMLITFLPYTFS. Topologically, residues 145 to 154 are lumenal; the sequence is LMATFPNNIL. The helical transmembrane segment at 155 to 176 threads the bilayer; the sequence is GILLFCACVMVIGLIQALIVLY. Residues 177–200 lie on the Cytoplasmic side of the membrane; that stretch reads GFSHPFLLNDQIQMSENQAYYKQH. The next 2 helical transmembrane spans lie at 201–221 and 222–242; these read ILKVIMRVPIMCLFASIFSFI and FFQLSYVLLAIVIFLPYISQC. Topologically, residues 243–274 are cytoplasmic; the sequence is LKWIRSKAIGGQTDESPDSMPFYTYHPSEPLS. A helical transmembrane segment spans residues 275–299; that stretch reads KERVEAFSDGVFAIVATLLILDICE. The short motif at 277 to 283 is the RxxxFSD motif 2 element; sequence RVEAFSD. Residues 300–326 lie on the Lumenal side of the membrane; the sequence is GNVPDPSVVKKKFDNSLIAALQEYGPE. A short helix H1-2 region spans residues 305-313; the sequence is PSVVKKKFD. The short helix H2-2 stretch occupies residues 315–321; it reads SLIAALQ. The helical transmembrane segment at 327-349 threads the bilayer; sequence YLAYFGSFVTVGLLWFVHHSLFL. The Cytoplasmic portion of the chain corresponds to 350–355; sequence HVTKAT. Residues 356–377 traverse the membrane as a helical segment; that stretch reads RLMGLFNTFSLAFVGGLPLAYQ. Over 378 to 392 the chain is Lumenal; that stretch reads LTHESPRGSRNELEA. The helical transmembrane segment at 393–413 threads the bilayer; sequence VQISCVIIFFASLFQLAIWVT. Over 414-433 the chain is Cytoplasmic; the sequence is ALFTERETLHPYVRYGGREH. The helical transmembrane segment at 434-457 threads the bilayer; the sequence is TFMLAKLSLYPCVALGTFFITCIL. Residues 458–459 are Lumenal-facing; it reads SR. A helical transmembrane segment spans residues 460–486; it reads FSAPIFHMMEICIPFAFLLLRLLVRVA. Residues 487–520 lie on the Cytoplasmic side of the membrane; the sequence is LALLRWLFCSARNDLERIPVEEEESRLPINDIVT.

This sequence belongs to the TMEM175 family. As to quaternary structure, homodimer.

The protein localises to the endosome membrane. It localises to the lysosome membrane. It catalyses the reaction H(+)(in) = H(+)(out). It carries out the reaction K(+)(in) = K(+)(out). Active at low pH (under pH 4.6): proton channel activity is activated by luminal side protons. Polyunsaturated fatty acids, such as arachidonic acid, also activate the channel activity. Proton-activated proton channel that catalyzes proton efflux from endosomes and lysosomes to maintain a steady-state pH. Activated at low pH (under pH 4.6) by luminal side protons: selectively mediates lysosomal proton release from lysosomes, eliciting a proton leak that balances V-ATPase activity to maintain pH homeostasis. Regulation of lumenal pH stability is required for autophagosome-lysosome fusion. Also acts as a potassium channel at higher pH, regulating potassium conductance in endosomes and lysosomes. This chain is Endosomal/lysosomal proton channel TMEM175, found in Danio rerio (Zebrafish).